We begin with the raw amino-acid sequence, 233 residues long: Large ribosomal subunit protein uL1 (233 aa).

This sequence belongs to the universal ribosomal protein uL1 family. Part of the 50S ribosomal subunit.

Functionally, binds directly to 23S rRNA. The L1 stalk is quite mobile in the ribosome, and is involved in E site tRNA release. Protein L1 is also a translational repressor protein, it controls the translation of the L11 operon by binding to its mRNA. This Novosphingobium aromaticivorans (strain ATCC 700278 / DSM 12444 / CCUG 56034 / CIP 105152 / NBRC 16084 / F199) protein is Large ribosomal subunit protein uL1.